The sequence spans 337 residues: GTPase Obg (337 aa).

The region spanning 1–161 (MNLTDNAVIF…FKIKLDFVFL (161 aa)) is the Obg domain. The OBG-type G domain occupies 162-333 (ADVGLFGYSN…LINKILLFLE (172 aa)). Residues 168–175 (GYSNTGRS), 193–197 (FTTLF), 214–217 (DIPS), 282–285 (NKTD), and 314–316 (SLN) contribute to the GTP site. Positions 175 and 195 each coordinate Mg(2+).

Belongs to the TRAFAC class OBG-HflX-like GTPase superfamily. OBG GTPase family. In terms of assembly, monomer. Mg(2+) is required as a cofactor.

Its subcellular location is the cytoplasm. Its function is as follows. An essential GTPase which binds GTP, GDP and possibly (p)ppGpp with moderate affinity, with high nucleotide exchange rates and a fairly low GTP hydrolysis rate. Plays a role in control of the cell cycle, stress response, ribosome biogenesis and in those bacteria that undergo differentiation, in morphogenesis control. This chain is GTPase Obg, found in Wigglesworthia glossinidia brevipalpis.